The following is a 682-amino-acid chain: Two-component system protein A (682 aa).

The tract at residues 11-41 is disordered; that stretch reads SLDDNDNGQQHQDEVQAKHQDQGHTCPSRPS. Basic and acidic residues predominate over residues 21–32; the sequence is HQDEVQAKHQDQ. 2 PAS domains span residues 45–105 and 166–239; these read LSRI…PILY and MNET…LREG. The PAC domain occupies 241–292; that stretch reads IEDEGWRYRRDGSRFWANVLITPIYQFGQHVGFVKVTRDLTERKEAEACMIA. Residues 307–530 enclose the Histidine kinase domain; it reads NISHEIRTPM…VFWFTAKMGG (224 aa). His-310 carries the post-translational modification Phosphohistidine; by autocatalysis. The 118-residue stretch at 563–680 folds into the Response regulatory domain; that stretch reads HVLLVEDNIV…QLLRVLWKWF (118 aa). A 4-aspartylphosphate modification is found at Asp-615.

Post-translationally, activation probably requires a transfer of a phosphate group between a His in the histidine kinase domain and an Asp of the response regulatory domain.

Its subcellular location is the cytoplasm. The catalysed reaction is ATP + protein L-histidine = ADP + protein N-phospho-L-histidine.. Functionally, may be part of a two-component regulatory system required for formation of conidia on certain growth media. This is Two-component system protein A from Emericella nidulans (strain FGSC A4 / ATCC 38163 / CBS 112.46 / NRRL 194 / M139) (Aspergillus nidulans).